The sequence spans 711 residues: Ribosomal RNA large subunit methyltransferase K/L (711 aa).

Residues 42 to 153 (DAQRAVLWSR…KGRATISVDL (112 aa)) form the THUMP domain.

This sequence belongs to the methyltransferase superfamily. RlmKL family.

The protein localises to the cytoplasm. The enzyme catalyses guanosine(2445) in 23S rRNA + S-adenosyl-L-methionine = N(2)-methylguanosine(2445) in 23S rRNA + S-adenosyl-L-homocysteine + H(+). It carries out the reaction guanosine(2069) in 23S rRNA + S-adenosyl-L-methionine = N(2)-methylguanosine(2069) in 23S rRNA + S-adenosyl-L-homocysteine + H(+). Specifically methylates the guanine in position 2445 (m2G2445) and the guanine in position 2069 (m7G2069) of 23S rRNA. The chain is Ribosomal RNA large subunit methyltransferase K/L from Xanthomonas campestris pv. campestris (strain 8004).